The primary structure comprises 112 residues: Reprimo-like protein (112 aa).

The helical transmembrane segment at 59 to 79 (VVQIAVLCVLSLTVLFGIFFL) threads the bilayer.

It belongs to the reprimo family.

Its subcellular location is the membrane. The sequence is that of Reprimo-like protein (rprml) from Xenopus laevis (African clawed frog).